The chain runs to 249 residues: Pleckstrin homology domain-containing family F member 2 (249 aa).

S16 bears the Phosphoserine mark. Residues 35-131 (VLIGEGVLTK…WMNHINKCVT (97 aa)) form the PH domain. K44 is subject to N6-acetyllysine. Residues 152 to 212 (DSEATVCMRC…ICDFCYDLLS (61 aa)) form an FYVE-type zinc finger. Residues C158, C161, C175, C178, C183, C186, C204, and C207 each coordinate Zn(2+). Residues 221-233 (PARSDSYSQSLKS) show a composition bias toward polar residues. Residues 221 to 249 (PARSDSYSQSLKSPLNDMSDDDDDDDSSD) are disordered. The span at 238–249 (MSDDDDDDDSSD) shows a compositional bias: acidic residues. 2 positions are modified to phosphoserine: S239 and S248.

As to quaternary structure, may interact with EEA1. As to expression, expressed in placenta, ovary and small intestine, as well as in heart and pancreas. Also expressed in peripheral blood mononuclear cells and dendritic cells.

It is found in the early endosome membrane. It localises to the endoplasmic reticulum. Functionally, may play a role in early endosome fusion upstream of RAB5, hence regulating receptor trafficking and fluid-phase transport. Enhances cellular sensitivity to TNF-induced apoptosis. The polypeptide is Pleckstrin homology domain-containing family F member 2 (PLEKHF2) (Homo sapiens (Human)).